Reading from the N-terminus, the 290-residue chain is uncharacterized protein (290 aa).

3 disordered regions span residues 89 to 157 (CSEN…EELS), 172 to 217 (MANT…MESS), and 261 to 290 (TANT…AVKK). Composition is skewed to basic and acidic residues over residues 106–124 (DFSK…EKQP) and 142–152 (KTEKLVSKEPS). Composition is skewed to polar residues over residues 172–183 (MANTSSSANRTG) and 193–202 (KPTTAVQAST). Composition is skewed to low complexity over residues 207 to 217 (MSSAESAMESS) and 274 to 290 (PSSE…AVKK).

This is an uncharacterized protein from Caenorhabditis elegans.